A 206-amino-acid polypeptide reads, in one-letter code: Probable 5-formyltetrahydrofolate cyclo-ligase (206 aa).

ATP-binding positions include K8 to R12 and R12. Residues V54, E59, and H146–Y150 contribute to the substrate site. An ATP-binding site is contributed by R143 to Y151. Residues D152 and D188 each contribute to the Mg(2+) site.

The protein belongs to the 5-formyltetrahydrofolate cyclo-ligase family. In terms of assembly, monomer. The cofactor is Mg(2+).

Its subcellular location is the cytoplasm. The enzyme catalyses (6S)-5-formyl-5,6,7,8-tetrahydrofolate + ATP = (6R)-5,10-methenyltetrahydrofolate + ADP + phosphate. Functionally, contributes to tetrahydrofolate metabolism. Helps regulate carbon flow through the folate-dependent one-carbon metabolic network that supplies carbon for the biosynthesis of purines, thymidine and amino acids. Catalyzes the irreversible conversion of 5-formyltetrahydrofolate (5-CHO-H(4)PteGlu) to yield 5,10-methenyltetrahydrofolate. This chain is Probable 5-formyltetrahydrofolate cyclo-ligase, found in Caenorhabditis elegans.